The chain runs to 93 residues: Putative pterin-4-alpha-carbinolamine dehydratase (93 aa).

This sequence belongs to the pterin-4-alpha-carbinolamine dehydratase family.

It carries out the reaction (4aS,6R)-4a-hydroxy-L-erythro-5,6,7,8-tetrahydrobiopterin = (6R)-L-erythro-6,7-dihydrobiopterin + H2O. The sequence is that of Putative pterin-4-alpha-carbinolamine dehydratase from Nostoc punctiforme (strain ATCC 29133 / PCC 73102).